The sequence spans 1290 residues: Vacuolating cytotoxin autotransporter (1290 aa).

The signal sequence occupies residues 1–33 (MEIQQTHRKINRPLVSLALVGALVSITPQQSHA). Positions 326–374 (PPEGGYKDKPKDKPSNTTQNNANNNQQNSAQNNSNTQVINPPNSAQKTE) are disordered. Positions 330–339 (GYKDKPKDKP) are enriched in basic and acidic residues. Residues 340–362 (SNTTQNNANNNQQNSAQNNSNTQ) show a composition bias toward low complexity. Positions 363–374 (VINPPNSAQKTE) are enriched in polar residues. The region spanning 1018–1290 (KYEKPTNVWA…ASNLGMRYSF (273 aa)) is the Autotransporter domain.

It localises to the periplasm. Its subcellular location is the secreted. It is found in the cell surface. The protein localises to the cell outer membrane. Its function is as follows. Induces vacuolation of eukaryotic cells. Causes ulceration and gastric lesions. The sequence is that of Vacuolating cytotoxin autotransporter (vacA) from Helicobacter pylori (strain ATCC 700392 / 26695) (Campylobacter pylori).